The chain runs to 352 residues: Iron-sulfur cluster carrier protein (352 aa).

Residue 114–121 (GKGGVGKS) coordinates ATP.

It belongs to the Mrp/NBP35 ATP-binding proteins family. Homodimer. Interacts with BrxC.

Its function is as follows. Binds and transfers iron-sulfur (Fe-S) clusters to target apoproteins. Can hydrolyze ATP. In terms of biological role, negatively regulates the expression of hpr/scoC. The effect on hpr/scoC may be indirect. This is Iron-sulfur cluster carrier protein (salA) from Bacillus subtilis (strain 168).